Here is a 135-residue protein sequence, read N- to C-terminus: Transcriptional activator protein (135 aa).

Positions 17–32 match the Nuclear localization signal motif; it reads KIQHHIAKKRQVRRRR. A zinc finger lies at 37 to 54; that stretch reads CGCSYYIHLDCINHGFTH. The tract at residues 120-135 is transactivation; the sequence is HLDDLTVSDWSFFKSL.

The protein belongs to the geminiviridae transcriptional activator protein family. Monomer. Homodimer. Homooligomer. Self-interaction correlates with nuclear localization and efficient activation of transcription. Monomers suppress local silencing by interacting with and inactivating host adenosine kinase 2 (ADK2) in the cytoplasm. Interacts with and inhibits host SNF1 kinase. Binds to ssDNA. May interact with host RPS27A. Post-translationally, phosphorylated.

Its subcellular location is the host nucleus. It localises to the host cytoplasm. Its function is as follows. Multifunctional protein that modulates host antiviral defenses and promotes host attractiveness to insect vectors. Acts as a suppressor of RNA-mediated gene silencing, also known as post-transcriptional gene silencing (PTGS), a mechanism of plant viral defense that limits the accumulation of viral RNAs. TrAP suppresses the host RNA silencing by inhibiting adenosine kinase 2 (ADK2), a kinase involved in a general methylation pathway. Also suppresses the host basal defense by interacting with and inhibiting SNF1 kinase, a key regulator of cell metabolism implicated in innate antiviral defense. Functionally, inhibits signal transduction by the phytohormone jasmonate, making the infected plant more attractive to aphids, which are the second host to play a role as a dissemination vector. Acts by binding to ubiquitin precursor RPS27A, thereby preventing ubiquitin degradation of JAZ. The chain is Transcriptional activator protein from Tomato yellow leaf curl Sardinia virus (isolate Spain-1) (TYLCSV).